The chain runs to 343 residues: Methionine import ATP-binding protein MetN 1 (343 aa).

Residues I2–I241 form the ABC transporter domain. Residue G38 to S45 participates in ATP binding.

This sequence belongs to the ABC transporter superfamily. Methionine importer (TC 3.A.1.24) family. In terms of assembly, the complex is composed of two ATP-binding proteins (MetN), two transmembrane proteins (MetI) and a solute-binding protein (MetQ).

The protein localises to the cell inner membrane. The catalysed reaction is L-methionine(out) + ATP + H2O = L-methionine(in) + ADP + phosphate + H(+). It catalyses the reaction D-methionine(out) + ATP + H2O = D-methionine(in) + ADP + phosphate + H(+). Part of the ABC transporter complex MetNIQ involved in methionine import. Responsible for energy coupling to the transport system. The polypeptide is Methionine import ATP-binding protein MetN 1 (Yersinia pestis bv. Antiqua (strain Antiqua)).